A 166-amino-acid polypeptide reads, in one-letter code: Small ribosomal subunit protein uS5 (166 aa).

Positions 11–74 (LEDRVVAINR…EDAKKNLVEV (64 aa)) constitute an S5 DRBM domain.

This sequence belongs to the universal ribosomal protein uS5 family. As to quaternary structure, part of the 30S ribosomal subunit. Contacts proteins S4 and S8.

In terms of biological role, with S4 and S12 plays an important role in translational accuracy. Located at the back of the 30S subunit body where it stabilizes the conformation of the head with respect to the body. The sequence is that of Small ribosomal subunit protein uS5 from Enterococcus faecalis (strain ATCC 700802 / V583).